We begin with the raw amino-acid sequence, 235 residues long: Orotidine 5'-phosphate decarboxylase (235 aa).

Substrate contacts are provided by residues Asp17, Lys39, Asp66–Thr75, Thr121, Arg182, Gln191, Gly211, and Arg212. Lys68 (proton donor) is an active-site residue.

This sequence belongs to the OMP decarboxylase family. Type 1 subfamily. As to quaternary structure, homodimer.

The enzyme catalyses orotidine 5'-phosphate + H(+) = UMP + CO2. It functions in the pathway pyrimidine metabolism; UMP biosynthesis via de novo pathway; UMP from orotate: step 2/2. In terms of biological role, catalyzes the decarboxylation of orotidine 5'-monophosphate (OMP) to uridine 5'-monophosphate (UMP). The sequence is that of Orotidine 5'-phosphate decarboxylase from Rhodopseudomonas palustris (strain BisB5).